A 440-amino-acid polypeptide reads, in one-letter code: Armadillo-like helical domain containing protein 1 (440 aa).

In Homo sapiens (Human), this protein is Armadillo-like helical domain containing protein 1.